A 70-amino-acid chain; its full sequence is Pyruvate-flavodoxin oxidoreductase (70 aa).

This sequence belongs to the pyruvate:ferredoxin/flavodoxin oxidoreductase family.

The catalysed reaction is oxidized [flavodoxin] + pyruvate + CoA + 2 H(+) = reduced [flavodoxin] + acetyl-CoA + CO2. Its function is as follows. Oxidoreductase required for the transfer of electrons from pyruvate to flavodoxin, which reduces nitrogenase. The protein is Pyruvate-flavodoxin oxidoreductase (nifJ) of Anabaena variabilis.